The sequence spans 538 residues: Nicotinate phosphoribosyltransferase (538 aa).

Nicotinate contacts are provided by tyrosine 21 and threonine 210. Histidine 213 bears the Phosphohistidine mark. Residue arginine 318 participates in nicotinate binding. Threonine 380 lines the 5-phospho-alpha-D-ribose 1-diphosphate pocket. Serine 537 bears the Phosphoserine mark.

It belongs to the NAPRTase family. In terms of assembly, homodimer. It depends on Mg(2+) as a cofactor. Requires Mn(2+) as cofactor. In terms of processing, transiently phosphorylated on a His residue during the reaction cycle. Phosphorylation strongly increases the affinity for substrates and increases the rate of nicotinate D-ribonucleotide production. Dephosphorylation regenerates the low-affinity form of the enzyme, leading to product release.

It is found in the cytoplasm. The protein resides in the cytosol. It carries out the reaction nicotinate + 5-phospho-alpha-D-ribose 1-diphosphate + ATP + H2O = nicotinate beta-D-ribonucleotide + ADP + phosphate + diphosphate. It functions in the pathway cofactor biosynthesis; NAD(+) biosynthesis; nicotinate D-ribonucleotide from nicotinate: step 1/1. Catalyzes the first step in the biosynthesis of NAD from nicotinic acid, the ATP-dependent synthesis of beta-nicotinate D-ribonucleotide from nicotinate and 5-phospho-D-ribose 1-phosphate. Helps prevent cellular oxidative stress via its role in NAD biosynthesis. This Homo sapiens (Human) protein is Nicotinate phosphoribosyltransferase (NAPRT).